Reading from the N-terminus, the 504-residue chain is Sodium-coupled neutral amino acid symporter 2 (504 aa).

The segment at 1 to 23 is disordered; the sequence is MKKTEMGRFNISPDEDSSSYSSN. Residues 1–76 lie on the Cytoplasmic side of the membrane; it reads MKKTEMGRFN…HPGTTSFGMS (76 aa). The regulates protein turnover upon amino acid deprivation stretch occupies residues 1 to 96; that stretch reads MKKTEMGRFN…SGILGLSYAM (96 aa). Ser12, Ser21, Ser22, and Ser55 each carry phosphoserine. Residues 77–96 traverse the membrane as a helical segment; sequence VFNLSNAIVGSGILGLSYAM. Asn82 contacts Na(+). Residues 97–102 are Extracellular-facing; the sequence is ANTGIA. The chain crosses the membrane as a helical span at residues 103–123; that stretch reads LFIILLTFVSIFSLYSVHLLL. Topologically, residues 124–158 are cytoplasmic; that stretch reads KTANEGGSLLYEQLGHKAYGLAGKLAASGSITMQN. The chain crosses the membrane as a helical span at residues 159–177; the sequence is IGAMSSYLFIVKYELPLVI. Residues 178–188 are Extracellular-facing; the sequence is KALMNIEDTNG. A helical transmembrane segment spans residues 189-209; it reads LWYLNGDYLVLLVSLVLILPL. The Cytoplasmic portion of the chain corresponds to 210–217; sequence SLLRNLGY. The helical transmembrane segment at 218 to 238 threads the bilayer; the sequence is LGYTSGLSLLCMIFFLIVVIC. The Extracellular portion of the chain corresponds to 239 to 289; that stretch reads KKFQIPCPVEAALVANETVNGTFTQAALALAFNSTADDACRPRYFIFNSQT. An intrachain disulfide couples Cys245 to Cys278. Residues Asn254 and Asn258 are each glycosylated (N-linked (GlcNAc...) asparagine). A helical transmembrane segment spans residues 290–310; the sequence is VYAVPILTFSFVCHPAVLPIY. Topologically, residues 311-326 are cytoplasmic; it reads EELKSRSRRRMMNVSK. Residues 327–347 form a helical membrane-spanning segment; it reads ISFFAMFLMYLLAALFGYLTF. The Extracellular segment spans residues 348–368; sequence YGHVESELLHTYSEIVGTDIL. Residues 369-389 form a helical membrane-spanning segment; it reads LLVVRLAVLVAVTLTVPVVIF. Residue Thr383 coordinates Na(+). Over 390 to 410 the chain is Cytoplasmic; sequence PIRSSVTHLLCPTKEFSWLRH. Residues 411-431 form a helical membrane-spanning segment; it reads SIITVTILSFTNLLVIFVPTI. The Extracellular segment spans residues 432-433; it reads RD. A helical membrane pass occupies residues 434–454; the sequence is IFGFIGASAAAMLIFILPSAF. Residues 455 to 469 lie on the Cytoplasmic side of the membrane; sequence YIKLVKKEPMRSVQK. The chain crosses the membrane as a helical span at residues 470–492; it reads IGALCFLLSGIVVMIGSMGLIVL. Residues 493–504 lie on the Extracellular side of the membrane; the sequence is DWVHDASAAGGH.

This sequence belongs to the amino acid/polyamine transporter 2 family. Polyubiquitination by NEDD4L regulates the degradation and the activity of SLC38A2. Expressed in cerebral and cerebellar astrocytes and neurons.

The protein resides in the cell membrane. The enzyme catalyses L-alanine(in) + Na(+)(in) = L-alanine(out) + Na(+)(out). It catalyses the reaction glycine(in) + Na(+)(in) = glycine(out) + Na(+)(out). It carries out the reaction L-serine(in) + Na(+)(in) = L-serine(out) + Na(+)(out). The catalysed reaction is L-proline(in) + Na(+)(in) = L-proline(out) + Na(+)(out). The enzyme catalyses L-methionine(in) + Na(+)(in) = L-methionine(out) + Na(+)(out). It catalyses the reaction L-histidine(in) + Na(+)(in) = L-histidine(out) + Na(+)(out). It carries out the reaction L-asparagine(in) + Na(+)(in) = L-asparagine(out) + Na(+)(out). The catalysed reaction is L-glutamine(in) + Na(+)(in) = L-glutamine(out) + Na(+)(out). The enzyme catalyses L-threonine(in) + Na(+)(in) = L-threonine(out) + Na(+)(out). It catalyses the reaction L-leucine(in) + Na(+)(in) = L-leucine(out) + Na(+)(out). It carries out the reaction L-phenylalanine(in) + Na(+)(in) = L-phenylalanine(out) + Na(+)(out). Inhibited by N-methyl-D-glucamine. Inhibited by choline. Allosteric regulation of sodium ions binding by pH. Symporter that cotransports neutral amino acids and sodium ions from the extracellular to the intracellular side of the cell membrane. The transport is pH-sensitive, Li(+)-intolerant, electrogenic, driven by the Na(+) electrochemical gradient and cotransports of neutral amino acids and sodium ions with a stoichiometry of 1:1. May function in the transport of amino acids at the blood-brain barrier. May function in the transport of amino acids in the supply of maternal nutrients to the fetus through the placenta. Maintains a key metabolic glutamine/glutamate balance underpinning retrograde signaling by dendritic release of the neurotransmitter glutamate. Transports L-proline in differentiating osteoblasts for the efficient synthesis of proline-enriched proteins and provides proline essential for osteoblast differentiation and bone formation during bone development. The polypeptide is Sodium-coupled neutral amino acid symporter 2 (Mus musculus (Mouse)).